The following is a 120-amino-acid chain: BLOC-1-related complex subunit 8 (120 aa).

Residues 101–120 (MNTSAQGHSQEKLSPPPSLA) are disordered. At Ser-109 the chain carries Phosphoserine.

The protein belongs to the BORCS8 family. Component of the BLOC-one-related complex (BORC) which is composed of BLOC1S1, BLOC1S2, BORCS5, BORCS6, BORCS7, BORCS8, KXD1 and SNAPIN.

It is found in the lysosome membrane. Functionally, as part of the BLOC-one-related complex (BORC), it plays a role in the movement and localization of lysosomes at the cell periphery. Associated with the cytosolic face of lysosomes, BORC recruits ARL8B to the lysosomal membrane and couples lysosomes to microtubule plus-end-directed kinesin motors, driving lysosome movement toward the cell periphery. This Mus musculus (Mouse) protein is BLOC-1-related complex subunit 8.